We begin with the raw amino-acid sequence, 213 residues long: Large ribosomal subunit protein uL1 (213 aa).

Belongs to the universal ribosomal protein uL1 family.

This chain is Large ribosomal subunit protein uL1 (RPL10A), found in Chlamydomonas reinhardtii (Chlamydomonas smithii).